A 1793-amino-acid polypeptide reads, in one-letter code: uncharacterized protein (1793 aa).

3 disordered regions span residues 156-189, 204-362, and 407-505; these read ARQA…ASSQ, QRES…PPKV, and ASFG…SGAA. The span at 166–175 shows a compositional bias: polar residues; the sequence is SSAQDSQELK. Over residues 227–237 the composition is skewed to basic and acidic residues; that stretch reads SPKEKAQDEPS. Residues 238–247 are compositionally biased toward polar residues; it reads SKTPSPQNNP. Over residues 248-258 the composition is skewed to low complexity; the sequence is ASSQLSRSQHS. A compositionally biased stretch (basic and acidic residues) spans 277 to 288; the sequence is KAEEDGLSKMED. Residues 289–307 are compositionally biased toward low complexity; sequence STTSTGALATSSSSLGFES. A compositionally biased stretch (gly residues) spans 317–342; sequence AVGGEGEKISGGGGGGKGGGGGGAGD. The span at 434–450 shows a compositional bias: low complexity; the sequence is STTPSTNTTRTPSPTSS. The span at 463 to 476 shows a compositional bias: polar residues; sequence DTSSTEVGSGPSDS. Over residues 485 to 505 the composition is skewed to low complexity; that stretch reads PGTAPLTEPLPETPEAASGAA. The residue at position 733 (Thr733) is a Phosphothreonine. Disordered stretches follow at residues 757 to 809, 829 to 917, 1090 to 1147, 1161 to 1187, 1229 to 1249, 1408 to 1465, and 1482 to 1567; these read RSES…SKFA, MERG…FTDG, RDIR…GSGS, QRED…NSSS, QKTP…ATKP, TGGV…KSNS, and GELL…PLPF. Composition is skewed to basic and acidic residues over residues 829-839 and 846-872; these read MERGEVMDTSH and KETE…HSEA. Residues 1113 to 1123 are compositionally biased toward low complexity; sequence KGSGDSSDKGS. The segment covering 1161-1174 has biased composition (basic and acidic residues); sequence QREDSMDREPRESM. Phosphoserine is present on Ser1187. Positions 1231-1246 are enriched in basic and acidic residues; the sequence is TPEKLKEEEVKEEGKA. Positions 1513-1528 are enriched in low complexity; it reads SQVPSSSKGSQVSGTS. Residues 1546 to 1555 are compositionally biased toward pro residues; sequence PPGPQSPEHP. Arg1774 carries the omega-N-methylarginine modification.

Expressed in muscle, heart, kidney and liver but barely detectable in lung, pancreas and brain. In liver veins, expressed in hepatic vein, extrahepatic portal vein and intrahepatic portal vein.

This is an uncharacterized protein from Homo sapiens (Human).